A 518-amino-acid polypeptide reads, in one-letter code: Cytochrome P450 monooxygenase COX1 (518 aa).

A helical transmembrane segment spans residues 7–25; the sequence is VLIALSSIVVAYFVKTALA. Residues Asn48, Asn100, Asn292, Asn302, and Asn351 are each glycosylated (N-linked (GlcNAc...) asparagine). Residue Cys450 coordinates heme. The N-linked (GlcNAc...) asparagine glycan is linked to Asn457.

This sequence belongs to the cytochrome P450 family. It depends on heme as a cofactor.

The protein resides in the membrane. Its pathway is secondary metabolite biosynthesis. Its function is as follows. Cytochrome P450 monooxygenase; part of the gene cluster that mediates the biosynthesis of alpha-cuprenene and oxidized derivatives. The alpha-cuprenene synthase COP6 is the only sesquiterpene synthase identified in C.cinereus that appears to be part of a biosynthetic gene cluster and is highly specific since it catalyzes the cyclization of (2E,6E)-farnesyl diphosphate into only one product, alpha-cuprenene. The cytochrome P450 monooxygenase COX2 then oxidizes the cyclohexadiene ring of alpha-cuprenene at positions 1 and 4, yielding first alpha-cuparene, followed by alpha-cuparophenol and a further yet unidentified compound resulting from one additional oxidation step. The cytochrome P450 monooxygenase COX1 then likely catalyzes the oxidation at position 9 of the pentane ring of alpha-cuprenene to give the corresponding hydroxy or ketone derivatives. This is Cytochrome P450 monooxygenase COX1 from Coprinopsis cinerea (strain Okayama-7 / 130 / ATCC MYA-4618 / FGSC 9003) (Inky cap fungus).